The following is a 38-amino-acid chain: Photosystem II reaction center protein M (38 aa).

The helical transmembrane segment at 7 to 27 (GFVASILFVLVPTVFLLILYI) threads the bilayer.

The protein belongs to the PsbM family. In terms of assembly, PSII is composed of 1 copy each of membrane proteins PsbA, PsbB, PsbC, PsbD, PsbE, PsbF, PsbH, PsbI, PsbJ, PsbK, PsbL, PsbM, PsbT, PsbX, PsbY, PsbZ, Psb30/Ycf12, peripheral proteins PsbO, CyanoQ (PsbQ), PsbU, PsbV and a large number of cofactors. It forms dimeric complexes.

It localises to the cellular thylakoid membrane. In terms of biological role, one of the components of the core complex of photosystem II (PSII). PSII is a light-driven water:plastoquinone oxidoreductase that uses light energy to abstract electrons from H(2)O, generating O(2) and a proton gradient subsequently used for ATP formation. It consists of a core antenna complex that captures photons, and an electron transfer chain that converts photonic excitation into a charge separation. This subunit is found at the monomer-monomer interface. The chain is Photosystem II reaction center protein M from Nostoc punctiforme (strain ATCC 29133 / PCC 73102).